Reading from the N-terminus, the 348-residue chain is Dihydroorotase (348 aa).

The Zn(2+) site is built by His-17 and His-19. Residues 19–21 (HLR) and Asn-45 each bind substrate. Zn(2+)-binding residues include Lys-103, His-140, and His-178. Residue Lys-103 is modified to N6-carboxylysine. Residue His-140 participates in substrate binding. Substrate is bound at residue Leu-223. Asp-251 is a Zn(2+) binding site. Asp-251 is an active-site residue. His-255 and Ala-267 together coordinate substrate.

It belongs to the metallo-dependent hydrolases superfamily. DHOase family. Class II DHOase subfamily. As to quaternary structure, homodimer. Requires Zn(2+) as cofactor.

It carries out the reaction (S)-dihydroorotate + H2O = N-carbamoyl-L-aspartate + H(+). The protein operates within pyrimidine metabolism; UMP biosynthesis via de novo pathway; (S)-dihydroorotate from bicarbonate: step 3/3. Its function is as follows. Catalyzes the reversible cyclization of carbamoyl aspartate to dihydroorotate. The chain is Dihydroorotase from Shigella boydii serotype 4 (strain Sb227).